The following is a 119-amino-acid chain: Large ribosomal subunit protein bL20 (119 aa).

The protein belongs to the bacterial ribosomal protein bL20 family.

Binds directly to 23S ribosomal RNA and is necessary for the in vitro assembly process of the 50S ribosomal subunit. It is not involved in the protein synthesizing functions of that subunit. The sequence is that of Large ribosomal subunit protein bL20 from Acinetobacter baumannii (strain SDF).